The sequence spans 391 residues: Processive diacylglycerol beta-glucosyltransferase (391 aa).

It belongs to the glycosyltransferase 28 family. UgtP subfamily.

The protein resides in the cell membrane. The catalysed reaction is a 1,2-diacyl-3-O-(beta-D-glucopyranosyl)-sn-glycerol + UDP-alpha-D-glucose = a 1,2-diacyl-3-O-(beta-D-Glc-(1-&gt;6)-beta-D-Glc)-sn-glycerol + UDP + H(+). It carries out the reaction a 1,2-diacyl-sn-glycerol + UDP-alpha-D-glucose = a 1,2-diacyl-3-O-(beta-D-glucopyranosyl)-sn-glycerol + UDP + H(+). Its pathway is glycolipid metabolism; diglucosyl-diacylglycerol biosynthesis. In terms of biological role, processive glucosyltransferase involved in the biosynthesis of both the bilayer- and non-bilayer-forming membrane glucolipids. Is able to successively transfer two glucosyl residues to diacylglycerol (DAG), thereby catalyzing the formation of beta-monoglucosyl-DAG (3-O-(beta-D-glucopyranosyl)-1,2-diacyl-sn-glycerol) and beta-diglucosyl-DAG (3-O-(beta-D-glucopyranosyl-beta-(1-&gt;6)-D-glucopyranosyl)-1,2-diacyl-sn-glycerol). Beta-diglucosyl-DAG is the predominant glycolipid found in Bacillales and is also used as a membrane anchor for lipoteichoic acid (LTA). In Staphylococcus haemolyticus (strain JCSC1435), this protein is Processive diacylglycerol beta-glucosyltransferase.